The sequence spans 93 residues: uncharacterized protein (93 aa).

A signal peptide spans 1-22 (MNKYWLSGIIFLAYGLASPAFS).

This is an uncharacterized protein from Escherichia coli (strain K12).